The primary structure comprises 513 residues: 5-aminolevulinate synthase, erythroid-specific, mitochondrial (513 aa).

The transit peptide at 1-18 (MAAFLRCPLLARHPPLAR) directs the protein to the mitochondrion. A succinyl-CoA-binding site is contributed by Arg98. Cys190 and Phe191 together coordinate pyridoxal 5'-phosphate. Ser212 and Lys231 together coordinate succinyl-CoA. Pyridoxal 5'-phosphate is bound by residues Ser264, His292, and Thr320. The active site involves Lys323. N6-(pyridoxal phosphate)lysine is present on Lys323. 2 residues coordinate pyridoxal 5'-phosphate: Thr352 and Thr353. Thr437 contributes to the succinyl-CoA binding site.

This sequence belongs to the class-II pyridoxal-phosphate-dependent aminotransferase family. Homodimer. Pyridoxal 5'-phosphate is required as a cofactor. As to expression, erythroid-specific.

It is found in the mitochondrion inner membrane. The catalysed reaction is succinyl-CoA + glycine + H(+) = 5-aminolevulinate + CO2 + CoA. It functions in the pathway porphyrin-containing compound metabolism; protoporphyrin-IX biosynthesis; 5-aminolevulinate from glycine: step 1/1. Catalyzes the pyridoxal 5'-phosphate (PLP)-dependent condensation of succinyl-CoA and glycine to form aminolevulinic acid (ALA), with CoA and CO2 as by-products. Contributes significantly to heme formation during erythropoiesis. The protein is 5-aminolevulinate synthase, erythroid-specific, mitochondrial (ALAS2) of Gallus gallus (Chicken).